The chain runs to 955 residues: Aminopeptidase A (955 aa).

Topologically, residues 1-17 (MDIEDKSSKMHCMKGKH) are cytoplasmic. The chain crosses the membrane as a helical; Signal-anchor for type II membrane protein span at residues 18–38 (VAIICGVVIAVGLILGLGLGL). The Extracellular portion of the chain corresponds to 39-955 (GLKPEACNPP…LENSEQPNFV (917 aa)). Positions 49–69 (EDNGLLSTKPPTTSTPNVTNP) are disordered. Positions 55–69 (STKPPTTSTPNVTNP) are enriched in low complexity. Asn-65, Asn-118, and Asn-192 each carry an N-linked (GlcNAc...) asparagine glycan. Glu-218 provides a ligand contact to substrate. Asn-312, Asn-319, and Asn-335 each carry an N-linked (GlcNAc...) asparagine glycan. Residue 352–356 (GAMEN) participates in substrate binding. His-388 contributes to the Zn(2+) binding site. The active-site Proton acceptor is the Glu-389. Residues His-392 and Glu-411 each coordinate Zn(2+). 11 N-linked (GlcNAc...) asparagine glycosylation sites follow: Asn-458, Asn-547, Asn-584, Asn-592, Asn-647, Asn-674, Asn-681, Asn-759, Asn-766, Asn-823, and Asn-836. Residue Arg-882 participates in substrate binding.

This sequence belongs to the peptidase M1 family. Homodimer; disulfide-linked. Zn(2+) is required as a cofactor.

The protein resides in the cell membrane. The catalysed reaction is Release of N-terminal glutamate (and to a lesser extent aspartate) from a peptide.. Its activity is regulated as follows. The partially purified protein is inhibited by the aminopeptidase competitive inhibitors amastatin (Leu and acidic inhibitor), and bestatin (Leu inhibitor), by chelating agents EDTA, and 1,10-Phenanthroline, as well as by Zn(2+) ions. Substrate specificity is modulated by Ca(2+), Ba(2+), and Mn(2+) ions which enhances the enzymatic activity for cleavage of acidic residues. Functionally, venom protein that cleaves N-terminal acidic residues from peptides with high potency in presence of calcium. It may have several roles in venom including alteration of blood pressure by cleaving circulating angiotensin-2, general degradation of host tissue, increase of permeability to other venom components, and/or processing of other toxins in the venom. The protein is Aminopeptidase A of Gloydius brevicauda (Korean slamosa snake).